Here is a 363-residue protein sequence, read N- to C-terminus: S-adenosylmethionine:tRNA ribosyltransferase-isomerase (363 aa).

This sequence belongs to the QueA family. Monomer.

It localises to the cytoplasm. It catalyses the reaction 7-aminomethyl-7-carbaguanosine(34) in tRNA + S-adenosyl-L-methionine = epoxyqueuosine(34) in tRNA + adenine + L-methionine + 2 H(+). It functions in the pathway tRNA modification; tRNA-queuosine biosynthesis. Transfers and isomerizes the ribose moiety from AdoMet to the 7-aminomethyl group of 7-deazaguanine (preQ1-tRNA) to give epoxyqueuosine (oQ-tRNA). The protein is S-adenosylmethionine:tRNA ribosyltransferase-isomerase of Haemophilus influenzae (strain ATCC 51907 / DSM 11121 / KW20 / Rd).